The following is a 510-amino-acid chain: MSKSPVAIIILDGFGKRAETVGNAVAQANKPNFDRYWADFPHGELKAAGLDVGLPEGQMGNSEVGHTNIGAGRIVYQSLTRIDKAIEEGEFQENKALNNAFTHTKENNSDLHLFGLLSDGGVHSHINHLVALLETAKDKGVKNVYIHAFLDGRDVAPQSSLEYLETLQKAISDLNYGAIATVSGRFYAMDRDKRWERVEKAYKAIVSAEGEKFEDPIELVKASYANDKNDEFVVPAIITKDGKPVATVKDNDAVIFFNFRPDRAIQLSNAFTDKEWDHFDRGADHPKNIKFVTMTLYNPSIDAEVAFEPIEMKNVIGEVLSNEGLSQLRIAETEKYPHVTFFMNGGRNEEFPGENRILINSPKVETYDLQPEMSAYEVTDALVEDIKNDKHDAIILNFANPDMVGHSGMLEPTIKAIEAVDENLGRVVDLILEKGGSAIIFADHGNSETMSTPEGKPHTAHTTVPVPVIVTKKGVTLREGGRLADVAPTMLDLLGVKKPAEMTGESLIQK.

Mn(2+) contacts are provided by Asp-12 and Ser-62. The active-site Phosphoserine intermediate is Ser-62. Residues His-123, 153–154, Arg-185, Arg-191, 260–263, and Lys-335 contribute to the substrate site; these read RD and RPDR. Mn(2+)-binding residues include Asp-402, His-406, Asp-443, His-444, and His-461.

The protein belongs to the BPG-independent phosphoglycerate mutase family. As to quaternary structure, monomer. Mn(2+) serves as cofactor.

It carries out the reaction (2R)-2-phosphoglycerate = (2R)-3-phosphoglycerate. The protein operates within carbohydrate degradation; glycolysis; pyruvate from D-glyceraldehyde 3-phosphate: step 3/5. Catalyzes the interconversion of 2-phosphoglycerate and 3-phosphoglycerate. The polypeptide is 2,3-bisphosphoglycerate-independent phosphoglycerate mutase (Listeria monocytogenes serovar 1/2a (strain ATCC BAA-679 / EGD-e)).